A 376-amino-acid chain; its full sequence is Phytanoyl-CoA hydroxylase-interacting protein-like (376 aa).

The Fibronectin type-III domain maps to 52-161 (VPHNIKISNI…EIIEFCTADY (110 aa)).

Belongs to the PHYHIP family.

In terms of biological role, may play a role in the development of the central system. This chain is Phytanoyl-CoA hydroxylase-interacting protein-like (phyhipl), found in Xenopus laevis (African clawed frog).